A 122-amino-acid chain; its full sequence is Large ribosomal subunit protein uL14 (122 aa).

Belongs to the universal ribosomal protein uL14 family. In terms of assembly, part of the 50S ribosomal subunit. Forms a cluster with proteins L3 and L19. In the 70S ribosome, L14 and L19 interact and together make contacts with the 16S rRNA in bridges B5 and B8.

Functionally, binds to 23S rRNA. Forms part of two intersubunit bridges in the 70S ribosome. The chain is Large ribosomal subunit protein uL14 from Heliobacterium modesticaldum (strain ATCC 51547 / Ice1).